The following is a 154-amino-acid chain: Catabolic 3-dehydroquinase (154 aa).

Catalysis depends on Y25, which acts as the Proton acceptor. The substrate site is built by N79, H85, and D92. The Proton donor role is filled by H105. Substrate is bound by residues 106 to 107 and R116; that span reads IS.

The protein belongs to the type-II 3-dehydroquinase family. Homododecamer. Adopts a ring-like structure, composed of an arrangement of two hexameric rings stacked on top of one another.

It catalyses the reaction 3-dehydroquinate = 3-dehydroshikimate + H2O. It functions in the pathway aromatic compound metabolism; 3,4-dihydroxybenzoate biosynthesis; 3,4-dihydroxybenzoate from 3-dehydroquinate: step 1/2. In terms of biological role, is involved in the catabolism of quinate. Allows the utilization of quinate as carbon source via the beta-ketoadipate pathway. This is Catabolic 3-dehydroquinase from Sclerotinia sclerotiorum (strain ATCC 18683 / 1980 / Ss-1) (White mold).